The sequence spans 243 residues: MTDTSTPDHANRTALVLFSGGQDSATCLAWALQRYARVETVGFDYGQRHHVEMTARERVRSGLAASFPHWGDRLGEDFVIDLAGYGAIADSALTADRAIEMQANGLPSTFVPGRNLVFLTVASALAYRRGHGVLVGGMCETDFSGYPDCRRNTIDAMQTALGLGLEMAVEIATPLMHLDKAATWALAHQLGGDALIGLIEEDSHTCYRGERGKRHAWGYGCGDCPACELRANGHAAWQNSVPA.

An ATP-binding site is contributed by 18–28 (FSGGQDSATCL). C206, C221, C224, and C227 together coordinate Zn(2+).

This sequence belongs to the QueC family. Zn(2+) is required as a cofactor.

It carries out the reaction 7-carboxy-7-deazaguanine + NH4(+) + ATP = 7-cyano-7-deazaguanine + ADP + phosphate + H2O + H(+). Its pathway is purine metabolism; 7-cyano-7-deazaguanine biosynthesis. In terms of biological role, catalyzes the ATP-dependent conversion of 7-carboxy-7-deazaguanine (CDG) to 7-cyano-7-deazaguanine (preQ(0)). In Maricaulis maris (strain MCS10) (Caulobacter maris), this protein is 7-cyano-7-deazaguanine synthase.